We begin with the raw amino-acid sequence, 236 residues long: Purine nucleoside phosphorylase DeoD-type 2 (236 aa).

H5 lines the a purine D-ribonucleoside pocket. Phosphate contacts are provided by residues G21, R25, R44, and 88 to 91 (RVGS). A purine D-ribonucleoside is bound by residues 180–182 (DME) and 204–205 (SD). Residue D205 is the Proton donor of the active site.

It belongs to the PNP/UDP phosphorylase family. Homohexamer; trimer of homodimers.

The catalysed reaction is a purine D-ribonucleoside + phosphate = a purine nucleobase + alpha-D-ribose 1-phosphate. The enzyme catalyses a purine 2'-deoxy-D-ribonucleoside + phosphate = a purine nucleobase + 2-deoxy-alpha-D-ribose 1-phosphate. In terms of biological role, catalyzes the reversible phosphorolytic breakdown of the N-glycosidic bond in the beta-(deoxy)ribonucleoside molecules, with the formation of the corresponding free purine bases and pentose-1-phosphate. The sequence is that of Purine nucleoside phosphorylase DeoD-type 2 from Vibrio parahaemolyticus serotype O3:K6 (strain RIMD 2210633).